We begin with the raw amino-acid sequence, 305 residues long: Methionyl-tRNA formyltransferase (305 aa).

108–111 contributes to the (6S)-5,6,7,8-tetrahydrofolate binding site; that stretch reads SLLP.

It belongs to the Fmt family.

The catalysed reaction is L-methionyl-tRNA(fMet) + (6R)-10-formyltetrahydrofolate = N-formyl-L-methionyl-tRNA(fMet) + (6S)-5,6,7,8-tetrahydrofolate + H(+). Attaches a formyl group to the free amino group of methionyl-tRNA(fMet). The formyl group appears to play a dual role in the initiator identity of N-formylmethionyl-tRNA by promoting its recognition by IF2 and preventing the misappropriation of this tRNA by the elongation apparatus. The protein is Methionyl-tRNA formyltransferase of Clavibacter sepedonicus (Clavibacter michiganensis subsp. sepedonicus).